Consider the following 325-residue polypeptide: RNA ligase 1 (325 aa).

Requires Mg(2+) as cofactor. Mn(2+) is required as a cofactor. In terms of processing, AMPylates itself (auto-AMPylation).

The catalysed reaction is ATP + (ribonucleotide)n-3'-hydroxyl + 5'-phospho-(ribonucleotide)m = (ribonucleotide)n+m + AMP + diphosphate.. Its function is as follows. Functions as an RNA ligase, in vitro. The ligation reaction entails three nucleotidyl transfer steps. In the first step, the RNA ligase reacts with ATP in the absence of nucleic acid to form a covalent ligase-AMP intermediate and release pyrophosphate. In step 2, the ligase-AMP binds to the nucleic acid and transfers the adenylate to the 5'-PO4 terminus to form an adenylylated intermediate. In step 3, the RNA ligase directs the attack of the 3'-OH on the 5'-phosphoanhydride linkage, resulting in a repaired 3'-5' phosphodiester and release of AMP. Exhibits selectivity for single-stranded RNA substrates and may not have nick-sealing activity on double-stranded DNA-RNA hybrids. May play a role in maintaining RNA integrity under stress conditions, for example in response to reactive oxygen species (ROS). In Pongo abelii (Sumatran orangutan), this protein is RNA ligase 1.